The sequence spans 51 residues: Large ribosomal subunit protein bL33 (51 aa).

Belongs to the bacterial ribosomal protein bL33 family.

In Idiomarina loihiensis (strain ATCC BAA-735 / DSM 15497 / L2-TR), this protein is Large ribosomal subunit protein bL33.